Here is a 255-residue protein sequence, read N- to C-terminus: Thiazole synthase (255 aa).

Lys-95 serves as the catalytic Schiff-base intermediate with DXP. 1-deoxy-D-xylulose 5-phosphate-binding positions include Gly-156, Ala-182–Gly-183, and Asn-204–Thr-205.

It belongs to the ThiG family. As to quaternary structure, homotetramer. Forms heterodimers with either ThiH or ThiS.

The protein localises to the cytoplasm. It carries out the reaction [ThiS sulfur-carrier protein]-C-terminal-Gly-aminoethanethioate + 2-iminoacetate + 1-deoxy-D-xylulose 5-phosphate = [ThiS sulfur-carrier protein]-C-terminal Gly-Gly + 2-[(2R,5Z)-2-carboxy-4-methylthiazol-5(2H)-ylidene]ethyl phosphate + 2 H2O + H(+). Its pathway is cofactor biosynthesis; thiamine diphosphate biosynthesis. Functionally, catalyzes the rearrangement of 1-deoxy-D-xylulose 5-phosphate (DXP) to produce the thiazole phosphate moiety of thiamine. Sulfur is provided by the thiocarboxylate moiety of the carrier protein ThiS. In vitro, sulfur can be provided by H(2)S. The sequence is that of Thiazole synthase from Vibrio campbellii (strain ATCC BAA-1116).